The chain runs to 85 residues: Cloacin immunity protein (85 aa).

Lysine 12 carries the post-translational modification N6-methyllysine.

It belongs to the cloacin immunity protein family.

Its function is as follows. This protein complexes with cloacin protein in equimolar amounts and inhibits it by binding with high affinity to the C-terminal catalytic domain of cloacin. This chain is Cloacin immunity protein (cim), found in Escherichia coli.